Consider the following 68-residue polypeptide: Large ribosomal subunit protein bL35 (68 aa).

It belongs to the bacterial ribosomal protein bL35 family.

This chain is Large ribosomal subunit protein bL35, found in Rickettsia conorii (strain ATCC VR-613 / Malish 7).